An 811-amino-acid chain; its full sequence is Actin filament-associated protein 1-like 2 (811 aa).

2 disordered regions span residues 67 to 110 (KEAQ…PPPK) and 132 to 168 (EPYN…QQHQ). Residues 181 to 277 (DAMICAFLWR…WLKVIQDISG (97 aa)) enclose the PH 1 domain. The disordered stretch occupies residues 294–326 (QRQIHPKAEGTDRHSGASESGSSTDGHPETPEI). Basic and acidic residues predominate over residues 299–309 (PKAEGTDRHSG). A PH 2 domain is found at 359–453 (ALETSNYLNV…WLGLLLLESG (95 aa)). Disordered regions lie at residues 500–532 (RGQR…GEAE) and 558–631 (LGSP…KERV). Basic and acidic residues-rich tracts occupy residues 521–532 (DEPKSEEKGEAE), 566–577 (VSGKKDNEESER), and 622–631 (RLEKSNKERV). Residues 642 to 737 (LLGKNRTEAE…KENLRKAELG (96 aa)) are a coiled coil.

As to quaternary structure, interacts with src.

Its subcellular location is the cytoplasm. May play a role in a signaling cascade by enhancing the kinase activity of src. Contributes to src-regulated transcription activation. This Xenopus laevis (African clawed frog) protein is Actin filament-associated protein 1-like 2 (afap1l2).